A 556-amino-acid chain; its full sequence is MSSPTADVEKLRRIIEVARGDRRADFVVKNAQIVDLVNEEIFEGDIAVAEGFIAGIGSYSGVEECEASNLVAVPGLIDAHTHIEMSMLTVSEFARLVVPRGTTGVVADPHEIANVLGKDGVMLMLEEARSTPLRFYCMVPSCVPSSPLETSGARIGVEEIRELLEEEEVLGLAEMMNFPGVVSADREVLEKIVLAGIVDGHAPGLRGKKLNAYIAAGASSDHETTSFEEGKEKLRLGMWVMIREGSAARNLVALKGLTGNRHTMLVTDGDRSVKDIIEEGYLDHVFRRAIEEGIDEIKALQMLTLNPAEYFGINAGLIAPSRLADIVLLKNLRKFEVRDVFVGGRRPEFKRFNHPEWAKKTVKARKITPESIQLKTGRVRVIEVYDGEIVTGEAIEEVQGVDVERDILKAVVVERHIRSGRVGKAYVRGFGLKRGAIAQSIAHDAHNIVCVGVDDGSICAAVNRVIELQGGIVVADAEVRAELPLPIAGIMSDERAERVLERLSEIEEEVRKLGCRLKSPVITLSFIALPVIPKLKLTDLGLVDVEAFRVVDLQAD.

Belongs to the metallo-dependent hydrolases superfamily. Adenine deaminase family. Requires Mn(2+) as cofactor.

It carries out the reaction adenine + H2O + H(+) = hypoxanthine + NH4(+). This Archaeoglobus fulgidus (strain ATCC 49558 / DSM 4304 / JCM 9628 / NBRC 100126 / VC-16) protein is Adenine deaminase.